The sequence spans 155 residues: Ciliary microtubule inner protein 2C (155 aa).

This sequence belongs to the CIMIP2 family.

The protein localises to the cytoplasm. It is found in the cytoskeleton. The protein resides in the cilium axoneme. Its function is as follows. Microtubule inner protein (MIP) part of the dynein-decorated doublet microtubules (DMTs) in cilia axoneme, which is required for motile cilia beating. This chain is Ciliary microtubule inner protein 2C (cimip2c), found in Xenopus tropicalis (Western clawed frog).